Here is a 1708-residue protein sequence, read N- to C-terminus: Rapamycin-insensitive companion of mTOR (1708 aa).

Residues 1 to 789 (MAAIGRGRSL…DKANLHALIQ (789 aa)) form an interaction with NBN region. 3 positions are modified to phosphoserine: Ser21, Ser35, and Ser265. Residue Lys274 forms a Glycyl lysine isopeptide (Lys-Gly) (interchain with G-Cter in ubiquitin) linkage. Positions 521–570 (LKDTEEALLINLRDSQVLQHKENLEWNWNLIGTILKWPNVNLRNYKDEQL) are ribosome-binding domain. The ATP site is built by Asn543, Arg572, and Arg576. The tract at residues 1022–1041 (LSLNSESTSSRHNSESESVP) is disordered. N6-acetyllysine is present on residues Lys1092 and Lys1095. Phosphothreonine is present on Thr1103. A disordered region spans residues 1103–1134 (TLPNKKHRSSSDPKGGKLSSESKTSNRRIRTL). Residues Lys1116, Lys1119, and Lys1125 each carry the N6-acetyllysine modification. At Thr1135 the chain carries Phosphothreonine; by RPS6KB1. Phosphoserine is present on residues Ser1138, Ser1162, and Ser1219. The interval 1204–1252 (VVESSTSSHMKIRSQSFNTDTTTSGISSMSSSPSRETVGVDATTMDTDC) is disordered. A compositionally biased stretch (polar residues) spans 1206 to 1221 (ESSTSSHMKIRSQSFN). A compositionally biased stretch (low complexity) spans 1222-1240 (TDTTTSGISSMSSSPSRET). A Phosphoserine; by GSK3-beta modification is found at Ser1235. A Phosphothreonine modification is found at Thr1271. Residues Ser1274, Ser1278, Ser1282, and Ser1284 each carry the phosphoserine modification. The segment covering 1275-1288 (NHLSLSKSNSVSLV) has biased composition (low complexity). The tract at residues 1275–1298 (NHLSLSKSNSVSLVPPGSSHTLPR) is disordered. The residue at position 1295 (Thr1295) is a Phosphothreonine. Ser1302 and Ser1313 each carry phosphoserine. The residue at position 1332 (Thr1332) is a Phosphothreonine. A phosphoserine mark is found at Ser1346 and Ser1353. Thr1376 is subject to Phosphothreonine. Ser1385 is modified (phosphoserine). Tyr1386 is modified (phosphotyrosine). A phosphoserine mark is found at Ser1388, Ser1396, and Ser1411. Residues His1515, Cys1520, and Cys1523 each contribute to the Zn(2+) site. Residues Ser1571, Ser1574, Ser1577, and Ser1591 each carry the phosphoserine modification. A Zn(2+)-binding site is contributed by Cys1651. Thr1695 carries the phosphothreonine; by GSK3-alpha and GSK3-beta modification.

This sequence belongs to the RICTOR family. Component of the mechanistic target of rapamycin complex 2 (mTORC2), consisting in two heterotretramers composed of MTOR, MLST8, RICTOR and MAPKAP1/SIN1. The mTORC2 core complex associates with PRR5/PROTOR1 and/or PRR5L/PROTOR2. Contrary to mTORC1, mTORC2 does not bind to and is not sensitive to FKBP12-rapamycin. Binds directly to MTOR and PRR5 within the TORC2 complex; interaction with MTOR is enhanced by deubiquitination of RICTOR by USP9X. Interaction with MAPKAP1 is not enhanced by RICTOR deubiquitination by USP9X. Interacts with CCDC28B. Interacts with NBN. Interacts with SIK3. Interacts with NCKAP1L. Interacts with kinases GSK3A and GSK3B; the interactions lead to phosphorylation of RICTOR at Thr-1695 which facilitates its FBXW7-mediated ubiquitination and subsequent degradation. Interacts with FBXW7; the interaction is enhanced by GSK3-mediated phosphorylation of Thr-1695 and results in RICTOR ubiquitination and degradation. Interacts with ARMH4 (via cytoplasmic tail); this interaction bridges ARMH4 to the mTORC2 complex and inhibits the mTORC2 kinase activity. Interacts with UBXN2A. Interacts with TSPAN8. In terms of assembly, (Microbial infection) Interacts with vaccinia virus protein F17; this interaction dysregulates MTOR. Post-translationally, phosphorylated by MTOR; when part of mTORC2. Phosphorylated at Thr-1135 by RPS6KB1 downstream of the mTORC1 complex: phosphorylation of RICTOR inhibits mTORC2 signaling by creating a binding site for 14-3-3 proteins. Phosphorylated at Thr-1695 by GSK3A and GSK3B which facilitates RICTOR ubiquitination and subsequent degradation. Phosphorylated at Ser-1235 by GSK3B in response to endoplasmic stress, inhibiting mTORC2 signaling. Ubiquitinated by the SCF(FBXW7) complex, leading to its degradation by the proteasome. Deubiquitinated by USP9X; deubiquitination stabilizes RICTOR and enhances its binding to MTOR, thus promoting mTORC2 complex assembly. In terms of processing, acetylated by EP300/p300 in response to glucose, leading to activate the mTORC2 complex. Acetylation by BLOC1S1/GCN5L1 in response to hypotoxic stress protects RICTOR against ubiquitination and subsequent degradation by the proteasome.

The protein localises to the cell membrane. The protein resides in the endoplasmic reticulum membrane. It localises to the lysosome membrane. Its function is as follows. Component of the mechanistic target of rapamycin complex 2 (mTORC2), which transduces signals from growth factors to pathways involved in proliferation, cytoskeletal organization, lipogenesis and anabolic output. In response to growth factors, mTORC2 phosphorylates and activates AGC protein kinase family members, including AKT (AKT1, AKT2 and AKT3), PKC (PRKCA, PRKCB and PRKCE) and SGK1. In contrast to mTORC1, mTORC2 is nutrient-insensitive. Within the mTORC2 complex, RICTOR probably acts as a molecular adapter. RICTOR is responsible for the FKBP12-rapamycin-insensitivity of mTORC2. mTORC2 plays a critical role in AKT1 activation by mediating phosphorylation of different sites depending on the context, such as 'Thr-450', 'Ser-473', 'Ser-477' or 'Thr-479', facilitating the phosphorylation of the activation loop of AKT1 on 'Thr-308' by PDPK1/PDK1 which is a prerequisite for full activation. mTORC2 catalyzes the phosphorylation of SGK1 at 'Ser-422' and of PRKCA on 'Ser-657'. The mTORC2 complex also phosphorylates various proteins involved in insulin signaling, such as FBXW8 and IGF2BP1. mTORC2 acts upstream of Rho GTPases to regulate the actin cytoskeleton, probably by activating one or more Rho-type guanine nucleotide exchange factors. mTORC2 promotes the serum-induced formation of stress-fibers or F-actin. The polypeptide is Rapamycin-insensitive companion of mTOR (Homo sapiens (Human)).